Reading from the N-terminus, the 74-residue chain is Conotoxin ca17a (74 aa).

Residues 1–20 form the signal peptide; the sequence is MQKATVLLLALLLLLPLSTA. The propeptide occupies 21–40; that stretch reads QDAEGSQEDAAQREVDIATR. At Pro51 the chain carries 4-hydroxyproline.

Contains disulfide bonds. Expressed by the venom gland.

Its subcellular location is the secreted. In Conus caracteristicus (Characteristic cone), this protein is Conotoxin ca17a.